Here is a 170-residue protein sequence, read N- to C-terminus: Phosphopantetheine adenylyltransferase (170 aa).

T17 serves as a coordination point for substrate. ATP contacts are provided by residues 17–18 (TF) and H25. 3 residues coordinate substrate: K49, L81, and R95. Residues 96 to 98 (GLR), E106, and 131 to 137 (LMYISST) contribute to the ATP site.

It belongs to the bacterial CoaD family. Homohexamer. Mg(2+) serves as cofactor.

It is found in the cytoplasm. The catalysed reaction is (R)-4'-phosphopantetheine + ATP + H(+) = 3'-dephospho-CoA + diphosphate. Its pathway is cofactor biosynthesis; coenzyme A biosynthesis; CoA from (R)-pantothenate: step 4/5. Its function is as follows. Reversibly transfers an adenylyl group from ATP to 4'-phosphopantetheine, yielding dephospho-CoA (dPCoA) and pyrophosphate. The chain is Phosphopantetheine adenylyltransferase from Legionella pneumophila subsp. pneumophila (strain Philadelphia 1 / ATCC 33152 / DSM 7513).